A 171-amino-acid chain; its full sequence is 6,7-dimethyl-8-ribityllumazine synthase (171 aa).

5-amino-6-(D-ribitylamino)uracil-binding positions include F30, 64–66 (ALE), and 88–90 (AVI). Residue 93–94 (ET) coordinates (2S)-2-hydroxy-3-oxobutyl phosphate. The active-site Proton donor is H96. N121 serves as a coordination point for 5-amino-6-(D-ribitylamino)uracil. A (2S)-2-hydroxy-3-oxobutyl phosphate-binding site is contributed by R135.

This sequence belongs to the DMRL synthase family.

The enzyme catalyses (2S)-2-hydroxy-3-oxobutyl phosphate + 5-amino-6-(D-ribitylamino)uracil = 6,7-dimethyl-8-(1-D-ribityl)lumazine + phosphate + 2 H2O + H(+). It participates in cofactor biosynthesis; riboflavin biosynthesis; riboflavin from 2-hydroxy-3-oxobutyl phosphate and 5-amino-6-(D-ribitylamino)uracil: step 1/2. In terms of biological role, catalyzes the formation of 6,7-dimethyl-8-ribityllumazine by condensation of 5-amino-6-(D-ribitylamino)uracil with 3,4-dihydroxy-2-butanone 4-phosphate. This is the penultimate step in the biosynthesis of riboflavin. The polypeptide is 6,7-dimethyl-8-ribityllumazine synthase (Polynucleobacter necessarius subsp. necessarius (strain STIR1)).